The sequence spans 859 residues: Protein argonaute-2 (859 aa).

Residues 1–27 (MYSGAGPALAPPAPPPPIQGYAFKPPP) are disordered. Tyrosine 2 is modified (3'-nitrotyrosine). Over residues 9–27 (LAPPAPPPPIQGYAFKPPP) the composition is skewed to pro residues. One can recognise a PAZ domain in the interval 229 to 348 (PVIEFVCEVL…LPLEVCNIVA (120 aa)). Positions 311 to 316 (YFKDRH) are interaction with guide RNA. Serine 387 carries the post-translational modification Phosphoserine. The region spanning 517–818 (LVVVILPGKT…VAFRARYHLV (302 aa)) is the Piwi domain. The interaction with guide RNA stretch occupies residues 524-566 (GKTPVYAEVKRVGDTVLGMATQCVQMKNVQRTTPQTLSNLCLK). Residues 587–590 (FQQP) form an interaction with GW182 family members region. Residue aspartate 597 coordinates a divalent metal cation. Positions 650 to 660 (LIQFYKSTRFK) are interaction with GW182 family members. Aspartate 669 lines the a divalent metal cation pocket. Residue proline 700 is modified to 4-hydroxyproline. Interaction with guide RNA regions lie at residues 709–710 (KR), 753–761 (HAGIQGTSR), and 790–812 (YVRC…VAFR). A divalent metal cation is bound at residue histidine 807. Residues serine 824, serine 828, serine 831, and serine 834 each carry the phosphoserine modification.

The protein belongs to the argonaute family. Ago subfamily. As to quaternary structure, interacts with DICER1 through its Piwi domain and with TARBP2 during assembly of the RNA-induced silencing complex (RISC). Together, DICER1, AGO2 and TARBP2 constitute the trimeric RISC loading complex (RLC), or micro-RNA (miRNA) loading complex (miRLC). Within the RLC/miRLC, DICER1 and TARBP2 are required to process precursor miRNAs (pre-miRNAs) to mature miRNAs and then load them onto AGO2. AGO2 bound to the mature miRNA constitutes the minimal RISC and may subsequently dissociate from DICER1 and TARBP2. Note however that the term RISC has also been used to describe the trimeric RLC/miRLC. The formation of RISC complexes containing siRNAs rather than miRNAs appears to occur independently of DICER1. Interacts with AGO1. Also interacts with DDB1, DDX5, DDX6, DDX20, DHX30, DHX36, DDX47, DHX9, ELAVL, FXR1, GEMIN4, HNRNPF, IGF2BP1, ILF3, IMP8, MATR3, PABPC1, PRMT5, P4HA1, P4HB, RBM4, SART3, TNRC6A, TNRC6B, UPF1 and YBX1. Interacts with the P-body components DCP1A and XRN1. Associates with polysomes and messenger ribonucleoproteins (mNRPs). Interacts with RBM4; the interaction is modulated under stress-induced conditions, occurs under both cell proliferation and differentiation conditions and in an RNA- and phosphorylation-independent manner. Interacts with LIMD1, WTIP and AJUBA. Interacts with TRIM71; the interaction increases in presence of RNA. Interacts with APOBEC3G in an RNA-dependent manner. Interacts with APOBEC3A, APOBEC3C, APOBEC3F and APOBEC3H. Interacts with DICER1, TARBP2, EIF6, MOV10 and RPL7A (60S ribosome subunit); they form a large RNA-induced silencing complex (RISC). Interacts with FMR1. Interacts with ZFP36. Found in a complex, composed of AGO2, CHD7 and ARB2A. Interacts with RC3H1; the interaction is RNA independent. Interacts with SND1. Interacts with SYT11. Interacts with CLNK. Interacts with GARRE1. Interacts with GRB2; this interaction is important for the formation of a ternary complex containing GRB2, AGO2 and DICER1. (Microbial infection) Interacts with Epstein-Barr virus (EBV) tegument protein BGLF2; this interaction participates in the regulation of cellular miRNA by the virus, leading to enhanced SUMOylation. In terms of assembly, (Microbial infection) Interacts with rotavirus A non-structural protein 5; this interaction probably plays a role in the sequestration of AGO2 in viral factories. As to quaternary structure, (Microbial infection) Interacts with human herpesvirus 8 protein MTA/ORF57; this interaction inhibits P-body formation. The cofactor is Mg(2+). Mn(2+) is required as a cofactor. Hydroxylated. 4-hydroxylation appears to enhance protein stability but is not required for miRNA-binding or endonuclease activity. Post-translationally, ubiquitinated on surface-exposed lysines by a SCF-like E3 ubiquitin-protein ligase complex containing ZSWIM8 during target-directed microRNA degradation (TDMD), a process that mediates degradation of microRNAs (miRNAs). Ubiquitination by the SCF-like E3 ubiquitin-protein ligase complex containing ZSWIM8 leads to its subsequent degradation, thereby exposing miRNAs for degradation. ZSWIM8 recognizes and binds AGO2 when it is engaged with a TDMD target. In terms of processing, phosphorylated. A phosphorylation cycle of C-terminal serine cluster (Ser-824-Ser-834) regulates the release of target mRNAs. Target-binding leads to phosphorylation of these residues by CSNK1A1, which reduces the affinity of AGO2 for mRNA and enables target release. The ANKRD52-PPP6C phosphatase complex dephosphorylates the residues, which primes AGO2 for binding a new target. Phosphorylation at Ser-387 by AKT3; leads to up-regulate translational repression of microRNA target and down-regulate endonucleolytic cleavage.

Its subcellular location is the cytoplasm. The protein localises to the P-body. The protein resides in the nucleus. The catalysed reaction is Endonucleolytic cleavage to 5'-phosphomonoester.. Inhibited by EDTA. In terms of biological role, required for RNA-mediated gene silencing (RNAi) by the RNA-induced silencing complex (RISC). The 'minimal RISC' appears to include AGO2 bound to a short guide RNA such as a microRNA (miRNA) or short interfering RNA (siRNA). These guide RNAs direct RISC to complementary mRNAs that are targets for RISC-mediated gene silencing. The precise mechanism of gene silencing depends on the degree of complementarity between the miRNA or siRNA and its target. Binding of RISC to a perfectly complementary mRNA generally results in silencing due to endonucleolytic cleavage of the mRNA specifically by AGO2. Binding of RISC to a partially complementary mRNA results in silencing through inhibition of translation, and this is independent of endonuclease activity. May inhibit translation initiation by binding to the 7-methylguanosine cap, thereby preventing the recruitment of the translation initiation factor eIF4-E. May also inhibit translation initiation via interaction with EIF6, which itself binds to the 60S ribosomal subunit and prevents its association with the 40S ribosomal subunit. The inhibition of translational initiation leads to the accumulation of the affected mRNA in cytoplasmic processing bodies (P-bodies), where mRNA degradation may subsequently occur. In some cases RISC-mediated translational repression is also observed for miRNAs that perfectly match the 3' untranslated region (3'-UTR). Can also up-regulate the translation of specific mRNAs under certain growth conditions. Binds to the AU element of the 3'-UTR of the TNF (TNF-alpha) mRNA and up-regulates translation under conditions of serum starvation. Also required for transcriptional gene silencing (TGS), in which short RNAs known as antigene RNAs or agRNAs direct the transcriptional repression of complementary promoter regions. (Microbial infection) Upon Sars-CoV-2 infection, associates with viral miRNA-like small RNA, CoV2-miR-O7a, and may repress mRNAs, such as BATF2, to evade the IFN response. This is Protein argonaute-2 from Homo sapiens (Human).